A 321-amino-acid polypeptide reads, in one-letter code: Lipoyl synthase (321 aa).

7 residues coordinate [4Fe-4S] cluster: C68, C73, C79, C94, C98, C101, and S308. In terms of domain architecture, Radical SAM core spans 80–297 (FNHGTATFMI…KEIALELGFT (218 aa)).

Belongs to the radical SAM superfamily. Lipoyl synthase family. The cofactor is [4Fe-4S] cluster.

It is found in the cytoplasm. The catalysed reaction is [[Fe-S] cluster scaffold protein carrying a second [4Fe-4S](2+) cluster] + N(6)-octanoyl-L-lysyl-[protein] + 2 oxidized [2Fe-2S]-[ferredoxin] + 2 S-adenosyl-L-methionine + 4 H(+) = [[Fe-S] cluster scaffold protein] + N(6)-[(R)-dihydrolipoyl]-L-lysyl-[protein] + 4 Fe(3+) + 2 hydrogen sulfide + 2 5'-deoxyadenosine + 2 L-methionine + 2 reduced [2Fe-2S]-[ferredoxin]. It participates in protein modification; protein lipoylation via endogenous pathway; protein N(6)-(lipoyl)lysine from octanoyl-[acyl-carrier-protein]: step 2/2. Its function is as follows. Catalyzes the radical-mediated insertion of two sulfur atoms into the C-6 and C-8 positions of the octanoyl moiety bound to the lipoyl domains of lipoate-dependent enzymes, thereby converting the octanoylated domains into lipoylated derivatives. The polypeptide is Lipoyl synthase (Vibrio vulnificus (strain CMCP6)).